The chain runs to 156 residues: Arginine repressor (156 aa).

This sequence belongs to the ArgR family.

The protein resides in the cytoplasm. It functions in the pathway amino-acid biosynthesis; L-arginine biosynthesis [regulation]. Regulates arginine biosynthesis genes. The sequence is that of Arginine repressor from Shewanella oneidensis (strain ATCC 700550 / JCM 31522 / CIP 106686 / LMG 19005 / NCIMB 14063 / MR-1).